Reading from the N-terminus, the 56-residue chain is MEVSARVRVLMQHALHTIERRYKQVLLLIQQLSQHGIQSYSISPFHIHCIYSCYSL.

Its pathway is polyketide biosynthesis. In terms of biological role, part of the gene cluster B that mediates the biosynthesis of botcinic acid and its botcinin derivatives, acetate-derived polyketides that contribute to virulence when combined with the sesquiterpene botrydial. Botcinic acid and its derivatives have been shown to induce chlorosis and necrosis during host plant infection, but also have antifungal activities. Two polyketide synthases, BOA6 and BOA9, are involved in the biosynthesis of botcinins. BOA6 mediates the formation of the per-methylated tetraketide core by condensation of four units of malonyl-CoA with one unit of acetyl-CoA, which would be methylated in activated methylene groups to yield a bicyclic acid intermediate that could then either be converted to botrylactone derivatives or lose the starter acetate unit through a retro-Claisen type C-C bond cleavage to yield botcinin derivatives. The second polyketide synthase, BOA9, is probably required for the biosynthesis of the tetraketide side chain of botcinins. The methyltransferase (MT) domain within BOA6 is probably responsible for the incorporation of four methyl groups. The trans-enoyl reductase BOA5 might take over the enoyl reductase function of BOA6 that misses an ER domain. The monooxygenases BOA2, BOA3 and BOA4 might be involved in further hydroxylations at C4, C5 and C8, whereas BOA7, close to BOA9, could potentially be involved in the hydroxylation at C4 in the side chain of botcinins. The sequence is that of Botcinic acid biosynthesis cluster B protein 14 from Botryotinia fuckeliana (strain B05.10) (Noble rot fungus).